The primary structure comprises 434 residues: Serine hydroxymethyltransferase (434 aa).

(6S)-5,6,7,8-tetrahydrofolate is bound by residues Leu-133 and 137-139; that span reads GHL. Lys-242 carries the N6-(pyridoxal phosphate)lysine modification.

This sequence belongs to the SHMT family. In terms of assembly, homodimer. Requires pyridoxal 5'-phosphate as cofactor.

The protein resides in the cytoplasm. The catalysed reaction is (6R)-5,10-methylene-5,6,7,8-tetrahydrofolate + glycine + H2O = (6S)-5,6,7,8-tetrahydrofolate + L-serine. It functions in the pathway one-carbon metabolism; tetrahydrofolate interconversion. The protein operates within amino-acid biosynthesis; glycine biosynthesis; glycine from L-serine: step 1/1. Catalyzes the reversible interconversion of serine and glycine with tetrahydrofolate (THF) serving as the one-carbon carrier. This reaction serves as the major source of one-carbon groups required for the biosynthesis of purines, thymidylate, methionine, and other important biomolecules. Also exhibits THF-independent aldolase activity toward beta-hydroxyamino acids, producing glycine and aldehydes, via a retro-aldol mechanism. This chain is Serine hydroxymethyltransferase, found in Bradyrhizobium sp. (strain BTAi1 / ATCC BAA-1182).